Consider the following 96-residue polypeptide: 5-hydroxytryptamine receptor 2B (96 aa).

The Extracellular portion of the chain corresponds to 1–8; that stretch reads CNQSTLQM. N2 is a glycosylation site (N-linked (GlcNAc...) asparagine). Residues 9 to 30 form a helical membrane-spanning segment; sequence LLEIFVWIGYVSSGVNPLVYTL. An NPxxY motif; important for ligand-induced conformation changes and signaling motif is present at residues 24 to 28; the sequence is NPLVY. Residues 31–96 are Cytoplasmic-facing; that stretch reads FNKTFRDAFG…STMYQSPVRL (66 aa). C45 carries S-palmitoyl cysteine lipidation.

It belongs to the G-protein coupled receptor 1 family. In terms of assembly, interacts (via C-terminus) with MPDZ.

It localises to the cell membrane. The protein resides in the synapse. The protein localises to the synaptosome. Its function is as follows. G-protein coupled receptor for 5-hydroxytryptamine (serotonin). Also functions as a receptor for various ergot alkaloid derivatives and psychoactive substances. Ligand binding causes a conformation change that triggers signaling via guanine nucleotide-binding proteins (G proteins) and modulates the activity of downstream effectors. HTR2B is coupled to G(q)/G(11) G alpha proteins and activates phospholipase C-beta, releasing diacylglycerol (DAG) and inositol 1,4,5-trisphosphate (IP3) second messengers that modulate the activity of phosphatidylinositol 3-kinase and promote the release of Ca(2+) ions from intracellular stores, respectively. Beta-arrestin family members inhibit signaling via G proteins and mediate activation of alternative signaling pathways. Plays a role in the regulation of dopamine and 5-hydroxytryptamine release, 5-hydroxytryptamine uptake and in the regulation of extracellular dopamine and 5-hydroxytryptamine levels, and thereby affects neural activity. May play a role in the perception of pain. Plays a role in the regulation of behavior, including impulsive behavior. Required for normal proliferation of embryonic cardiac myocytes and normal heart development. Protects cardiomyocytes against apoptosis. Plays a role in the adaptation of pulmonary arteries to chronic hypoxia. Plays a role in vasoconstriction. Required for normal osteoblast function and proliferation, and for maintaining normal bone density. Required for normal proliferation of the interstitial cells of Cajal in the intestine. This Cavia porcellus (Guinea pig) protein is 5-hydroxytryptamine receptor 2B (HTR2B).